A 132-amino-acid polypeptide reads, in one-letter code: Small ribosomal subunit protein uS8 (132 aa).

The protein belongs to the universal ribosomal protein uS8 family. Part of the 30S ribosomal subunit. Contacts proteins S5 and S12.

Functionally, one of the primary rRNA binding proteins, it binds directly to 16S rRNA central domain where it helps coordinate assembly of the platform of the 30S subunit. The polypeptide is Small ribosomal subunit protein uS8 (Xanthomonas campestris pv. campestris (strain 8004)).